The following is a 513-amino-acid chain: Chromosomal replication initiator protein DnaA (513 aa).

A domain I, interacts with DnaA modulators region spans residues 1 to 87 (MSVELWQQCV…IGSKRSSAPR (87 aa)). The tract at residues 87 to 176 (RAAPNAPLAA…QVEGALKHTS (90 aa)) is domain II. Positions 113–163 (AAPAPAPAPTSAPAKKAAAQKAAEVSEEPSRDSFDPMAGASSQQAPVRAEQ) are disordered. Low complexity predominate over residues 123–135 (SAPAKKAAAQKAA). The tract at residues 177–393 (YLNRTFTFEN…GALKRVIAHS (217 aa)) is domain III, AAA+ region. 4 residues coordinate ATP: Gly221, Gly223, Lys224, and Thr225. Residues 394–513 (HFMGRDITIE…YKNLLRTLTT (120 aa)) form a domain IV, binds dsDNA region.

The protein belongs to the DnaA family. As to quaternary structure, oligomerizes as a right-handed, spiral filament on DNA at oriC.

Its subcellular location is the cytoplasm. Functionally, plays an essential role in the initiation and regulation of chromosomal replication. ATP-DnaA binds to the origin of replication (oriC) to initiate formation of the DNA replication initiation complex once per cell cycle. Binds the DnaA box (a 9 base pair repeat at the origin) and separates the double-stranded (ds)DNA. Forms a right-handed helical filament on oriC DNA; dsDNA binds to the exterior of the filament while single-stranded (ss)DNA is stabiized in the filament's interior. The ATP-DnaA-oriC complex binds and stabilizes one strand of the AT-rich DNA unwinding element (DUE), permitting loading of DNA polymerase. After initiation quickly degrades to an ADP-DnaA complex that is not apt for DNA replication. Binds acidic phospholipids. In Pseudomonas fluorescens (strain ATCC BAA-477 / NRRL B-23932 / Pf-5), this protein is Chromosomal replication initiator protein DnaA.